We begin with the raw amino-acid sequence, 179 residues long: ATP synthase subunit delta (179 aa).

The protein belongs to the ATPase delta chain family. F-type ATPases have 2 components, F(1) - the catalytic core - and F(0) - the membrane proton channel. F(1) has five subunits: alpha(3), beta(3), gamma(1), delta(1), epsilon(1). F(0) has three main subunits: a(1), b(2) and c(10-14). The alpha and beta chains form an alternating ring which encloses part of the gamma chain. F(1) is attached to F(0) by a central stalk formed by the gamma and epsilon chains, while a peripheral stalk is formed by the delta and b chains.

The protein resides in the cell membrane. Functionally, f(1)F(0) ATP synthase produces ATP from ADP in the presence of a proton or sodium gradient. F-type ATPases consist of two structural domains, F(1) containing the extramembraneous catalytic core and F(0) containing the membrane proton channel, linked together by a central stalk and a peripheral stalk. During catalysis, ATP synthesis in the catalytic domain of F(1) is coupled via a rotary mechanism of the central stalk subunits to proton translocation. This protein is part of the stalk that links CF(0) to CF(1). It either transmits conformational changes from CF(0) to CF(1) or is implicated in proton conduction. The sequence is that of ATP synthase subunit delta from Clostridium botulinum (strain Kyoto / Type A2).